A 142-amino-acid polypeptide reads, in one-letter code: Transcription antitermination protein NusB (142 aa).

The protein belongs to the NusB family.

In terms of biological role, involved in transcription antitermination. Required for transcription of ribosomal RNA (rRNA) genes. Binds specifically to the boxA antiterminator sequence of the ribosomal RNA (rrn) operons. In Latilactobacillus sakei subsp. sakei (strain 23K) (Lactobacillus sakei subsp. sakei), this protein is Transcription antitermination protein NusB.